Reading from the N-terminus, the 625-residue chain is DELLA protein SLR1 (625 aa).

Residues 1–34 (MKREYQEAGGSSGGGSSADMGSCKDKVMAGAAGE) form a disordered region. The short motif at 39–43 (DELLA) is the DELLA motif element. The interval 167-209 (TADPSAADSARDTKRMRTGGGSTSSSSSSSSSLGGGASRGSVV) is disordered. Over residues 189–198 (TSSSSSSSSS) the composition is skewed to low complexity. The GRAS domain occupies 232–621 (VDTQEAGIRL…RPLIATSAWR (390 aa)). The segment at 239-294 (IRLVHALLACAEAVQQENFAAAEALVKQIPTLAASQGGAMRKVAAYFGEALARRVY) is leucine repeat I (LRI). Residues 241-278 (LVHALLACAEAVQQENFAAAEALVKQIPTLAASQGGAM) form a required for possible homodimerization region. Residues 246-250 (LACAE) carry the LxCxE motif motif. The interval 313–378 (HAHFYESCPY…GGPPSFRLTG (66 aa)) is VHIID. Residues 344 to 348 (VHVVD) carry the VHIID motif. A leucine repeat II (LRII) region spans residues 392–431 (QVGWKLAQFAHTIRVDFQYRGLVAATLADLEPFMLQPEGE). The interval 441–542 (IAVNSVFELH…EVYLGRQICN (102 aa)) is PFYRE. The LXXLL motif motif lies at 449 to 453 (LHRLL). The SAW stretch occupies residues 545–621 (ACEGAERTER…RPLIATSAWR (77 aa)).

Belongs to the GRAS family. DELLA subfamily. In terms of assembly, may be a homodimer. Interacts directly with the GID2 component of the SCF(GID2) complex. Interacts with GID1 in a GA-dependent manner, probably leading to its interaction with GID2 and its subsequent degradation. Interacts with D14 and GID1 in an strigolactone-dependent manner. Interacts with HD16/EL1. In terms of processing, phosphorylated on Ser/Thr residues in the N-terminal part. Both phosphorylated and unphosphorylated forms are degraded upon GA treatment, suggesting that phosphorylation does not trigger ubiquitination. Phosphorylated by HD16/EL1. Phosphorylation enhances its stability. Post-translationally, ubiquitinated. Upon GA application it is ubiquitinated by the SCF(GID2) complex, leading to its subsequent degradation. As to expression, expressed in nodes, internodes, leaf sheats of young seedlings and ears of adult plants. Weakly expressed in leaf blade and root.

The protein localises to the nucleus. Functionally, probable transcriptional regulator that acts as a repressor of the gibberellin (GA) signaling pathway. Probably acts by participating in large multiprotein complexes that repress transcription of GA-inducible genes. Upon GA application, it is degraded by the proteasome, allowing the GA signaling pathway. In contrast, its overexpression prevents the GA signaling pathway and induces a dwarf phenotype. This Oryza sativa subsp. japonica (Rice) protein is DELLA protein SLR1.